The sequence spans 953 residues: Glycine dehydrogenase (decarboxylating) (953 aa).

Lys-705 carries the N6-(pyridoxal phosphate)lysine modification.

The protein belongs to the GcvP family. In terms of assembly, the glycine cleavage system is composed of four proteins: P, T, L and H. Requires pyridoxal 5'-phosphate as cofactor.

It catalyses the reaction N(6)-[(R)-lipoyl]-L-lysyl-[glycine-cleavage complex H protein] + glycine + H(+) = N(6)-[(R)-S(8)-aminomethyldihydrolipoyl]-L-lysyl-[glycine-cleavage complex H protein] + CO2. In terms of biological role, the glycine cleavage system catalyzes the degradation of glycine. The P protein binds the alpha-amino group of glycine through its pyridoxal phosphate cofactor; CO(2) is released and the remaining methylamine moiety is then transferred to the lipoamide cofactor of the H protein. The polypeptide is Glycine dehydrogenase (decarboxylating) (Sodalis glossinidius (strain morsitans)).